The primary structure comprises 610 residues: E-selectin (610 aa).

An N-terminal signal peptide occupies residues 1-21 (MIASQFLSALTLVLLIKESGA). The C-type lectin domain maps to 22-138 (WSYSASTTNM…CNKKKLALCY (117 aa)). Residues 22-555 (WSYSASTTNM…CEATAKSNIP (534 aa)) lie on the Extracellular side of the membrane. N30 carries an N-linked (GlcNAc...) asparagine glycan. 19 cysteine pairs are disulfide-bonded: C40–C137, C110–C129, C142–C153, C147–C162, C164–C173, C179–C223, C192–C205, C209–C236, C241–C285, C254–C267, C271–C298, C303–C348, C334–C361, C366–C411, C397–C424, C429–C474, C460–C487, C492–C533, and C519–C546. Residues E101, N103, and E108 each contribute to the Ca(2+) site. Residues 101–108 (EPNNKQNE), 112–117 (EIYIKR), and 125–127 (NDE) each bind a carbohydrate. N125 and D126 together coordinate Ca(2+). One can recognise an EGF-like domain in the interval 139-174 (TAACTHTSCSGHGECVETINNYTCQCHPGFTGLRCE). The N-linked (GlcNAc...) asparagine glycan is linked to N159. Sushi domains lie at 177–238 (VTCQ…ACHV), 239–300 (VECD…TCKA), 314–363 (VNCS…VCKA), 365–426 (QCKA…TCEA), 428–489 (RCDA…SCQV), and 490–548 (VQCA…TCEA). N198 and N202 each carry an N-linked (GlcNAc...) asparagine glycan. N264 is a glycosylation site (N-linked (GlcNAc...) asparagine). 3 N-linked (GlcNAc...) asparagine glycosylation sites follow: N315, N327, and N331. N526 is a glycosylation site (N-linked (GlcNAc...) asparagine). The helical transmembrane segment at 556-577 (LTVGLSAAGTSLLTLASFLFWL) threads the bilayer. Topologically, residues 578-610 (LKRLRRKAKKFVPASSYQSLQSDGSYQMPSESA) are cytoplasmic.

This sequence belongs to the selectin/LECAM family. Interacts with SELPLG/PSGL1 and PODXL2 through the sialyl Lewis X epitope. SELPLG sulfation appears not to be required for this interaction.

It is found in the cell membrane. In terms of biological role, cell-surface glycoprotein having a role in immunoadhesion. Mediates in the adhesion of blood neutrophils in cytokine-activated endothelium through interaction with SELPLG/PSGL1. May have a role in capillary morphogenesis. This Equus caballus (Horse) protein is E-selectin (SELE).